Consider the following 429-residue polypeptide: Arrestin-related trafficking adapter 10 (429 aa).

This sequence belongs to the ART10 family.

It localises to the cytoplasm. May regulate endocytosis by recruiting RSP5 ubiquitin ligase activity to specific plasma membrane proteins in response to extracellular stimuli. This Lachancea thermotolerans (strain ATCC 56472 / CBS 6340 / NRRL Y-8284) (Yeast) protein is Arrestin-related trafficking adapter 10 (ART10).